We begin with the raw amino-acid sequence, 343 residues long: F17g-G fimbrial adhesin (343 aa).

Positions 1–22 are cleaved as a signal peptide; it reads MTNFYKVCLAVFILVCCNISHA. Positions 23–199 are receptor-binding lectin domain; it reads AVSFIGSTEN…LNPFTLNDTV (177 aa). A carbohydrate-binding positions include 65 to 66, 110 to 111, and 138 to 141; these read AN, DT, and STQG. Cys-75 and Cys-132 are disulfide-bonded. Residues 200-343 are fimbrillin-binding domain; sequence TSCRLLTPSA…GISTFTFSYQ (144 aa). The disordered stretch occupies residues 287–307; it reads LKFGPDSPVKGNENQWQLSTG. Polar residues predominate over residues 298–307; that stretch reads NENQWQLSTG.

This sequence belongs to the fimbrial protein family.

The protein resides in the fimbrium. In terms of biological role, essential fimbrial adhesion factor that mediates binding to N-acetylglucosamine-containing receptors in the host intestinal microvilli, leading to colonization of the intestinal tissue, and diarrhea or septicemia. Also confers adhesiveness to laminin and basement membranes. May be involved in the initiation of polymerization of fimbrillin monomers during fimbrial filament biogenesis. The protein is F17g-G fimbrial adhesin (f17gG) of Escherichia coli.